The following is a 650-amino-acid chain: Aminopeptidase B (650 aa).

A2 is modified (N-acetylalanine). At S7 the chain carries Phosphoserine. 298–302 (GGMEN) lines the substrate pocket. H325 contacts Zn(2+). Residue E326 is the Proton acceptor of the active site. Residues H329 and E348 each contribute to the Zn(2+) site. An N6-acetyllysine modification is found at K446.

It belongs to the peptidase M1 family. The cofactor is Zn(2+).

The protein resides in the secreted. The enzyme catalyses Release of N-terminal Arg and Lys from oligopeptides when P1' is not Pro. Also acts on arylamides of Arg and Lys.. Its function is as follows. Exopeptidase which selectively removes arginine and/or lysine residues from the N-terminus of several peptide substrates including Arg(0)-Leu-enkephalin, Arg(0)-Met-enkephalin and Arg(-1)-Lys(0)-somatostatin-14. Can hydrolyze leukotriene A4 (LTA-4) into leukotriene B4 (LTB-4). This Homo sapiens (Human) protein is Aminopeptidase B (RNPEP).